Reading from the N-terminus, the 1865-residue chain is Dedicator of cytokinesis protein 1 (1865 aa).

The SH3 domain occupies 9 to 70 (REEKYGVAFY…PASYIHLKEA (62 aa)). The region spanning 425-609 (RNDIYVTLVQ…DSFQISTLVC (185 aa)) is the C2 DOCK-type domain. One can recognise a DOCKER domain in the interval 1207–1617 (YKEIEREEMY…VEKEYGVRIM (411 aa)). Disordered regions lie at residues 1619 to 1716 (SSLD…EFKP) and 1732 to 1865 (TISP…GIVQ). The segment covering 1639 to 1666 (PSSSRPLSVASVSSLSSDSTPSRPGSDG) has biased composition (low complexity). Residues 1680–1694 (RSQDKLDKDDLEKEK) are compositionally biased toward basic and acidic residues. Phosphoserine is present on serine 1681. Positions 1687 to 1695 (KDDLEKEKK) are phosphoinositide-binding. The span at 1695 to 1704 (KDKKKEKRNS) shows a compositional bias: basic residues. Residues 1705–1716 (KHQEIFEKEFKP) are compositionally biased toward basic and acidic residues. Phosphoserine is present on residues serine 1743, serine 1751, serine 1756, serine 1761, and serine 1764. The segment covering 1756 to 1766 (SVSPSSPSSQQ) has biased composition (low complexity). Phosphothreonine is present on residues threonine 1767 and threonine 1772. The segment at 1793–1819 (ADVADVPPPLPLKGSVADYGNLMENQD) is interaction with NCK2 second and third SH3 domain (minor). Residues 1799–1805 (PPPLPLK) carry the SH3-binding; interaction with CRK motif. The segment at 1820-1836 (LLGSPTPPPPPPHQRHL) is interaction with NCK2 third SH3 domain (major). Pro residues predominate over residues 1824 to 1851 (PTPPPPPPHQRHLPPPLPSKTPPPPPPK). Residues 1837 to 1852 (PPPLPSKTPPPPPPKT) form an interaction with NCK2 (minor) region. An SH3-binding; interaction with CRK motif is present at residues 1838–1843 (PPLPSK). Positions 1855 to 1865 (KQASVDSGIVQ) are enriched in polar residues. Serine 1858 carries the phosphoserine modification.

Belongs to the DOCK family. As to quaternary structure, interacts with the SH3 domains of CRK and NCK2 via multiple sites. Interacts with nucleotide-free RAC1 via its DOCKER domain. Interacts with ELMO1, ELMO2 and probably ELMO3 via its SH3 domain. Interacts with ADGRB1. Identified in a complex with AUTS2 and ELMO2. In terms of tissue distribution, highly expressed in placenta, lung, kidney, pancreas and ovary. Expressed at intermediate level in thymus, testes and colon.

It is found in the cytoplasm. It localises to the membrane. In terms of biological role, involved in cytoskeletal rearrangements required for phagocytosis of apoptotic cells and cell motility. Along with DOCK1, mediates CRK/CRKL regulation of epithelial and endothelial cell spreading and migration on type IV collagen. Functions as a guanine nucleotide exchange factor (GEF), which activates Rac Rho small GTPases by exchanging bound GDP for free GTP. Its GEF activity may be enhanced by ELMO1. This Homo sapiens (Human) protein is Dedicator of cytokinesis protein 1 (DOCK1).